Reading from the N-terminus, the 173-residue chain is ATP-dependent protease subunit HslV (173 aa).

Thr-2 is an active-site residue. Gly-158, Asp-161, and Ser-164 together coordinate Na(+).

Belongs to the peptidase T1B family. HslV subfamily. A double ring-shaped homohexamer of HslV is capped on each side by a ring-shaped HslU homohexamer. The assembly of the HslU/HslV complex is dependent on binding of ATP.

The protein localises to the cytoplasm. The enzyme catalyses ATP-dependent cleavage of peptide bonds with broad specificity.. Allosterically activated by HslU binding. Functionally, protease subunit of a proteasome-like degradation complex believed to be a general protein degrading machinery. The sequence is that of ATP-dependent protease subunit HslV from Mannheimia haemolytica (Pasteurella haemolytica).